A 154-amino-acid chain; its full sequence is Style cell-cycle inhibitor 1-A (154 aa).

Basic and acidic residues-rich tracts occupy residues 1 to 11 (MGSDKKTPEEK) and 24 to 48 (DEVKSKRQNIKGDEERRKEKKDKSK). The segment at 1–84 (MGSDKKTPEE…DKSKNKFEEL (84 aa)) is disordered. The segment covering 63 to 77 (GEKHKTKSHKHKDKS) has biased composition (basic residues).

As to expression, specifically expressed in flowers pistils, especially in stigmas and styles. Barely detected in roots, stems, leaves, sepals, petals and stamen.

The protein resides in the nucleus. Functionally, component of the auxin signaling transduction pathway that regulates cell proliferation and differentiation during flowers stigmas and styles development. Involved in the regulation of auxin-related genes. The sequence is that of Style cell-cycle inhibitor 1-A from Nicotiana tabacum (Common tobacco).